A 318-amino-acid polypeptide reads, in one-letter code: Homoserine kinase (318 aa).

Residue 97 to 107 (PIGSGLGSSAC) participates in ATP binding.

The protein belongs to the GHMP kinase family. Homoserine kinase subfamily.

The protein localises to the cytoplasm. The catalysed reaction is L-homoserine + ATP = O-phospho-L-homoserine + ADP + H(+). It participates in amino-acid biosynthesis; L-threonine biosynthesis; L-threonine from L-aspartate: step 4/5. Its function is as follows. Catalyzes the ATP-dependent phosphorylation of L-homoserine to L-homoserine phosphate. This is Homoserine kinase from Aliivibrio salmonicida (strain LFI1238) (Vibrio salmonicida (strain LFI1238)).